A 341-amino-acid chain; its full sequence is Homeobox protein knotted-1-like 8 (341 aa).

A compositionally biased stretch (low complexity) spans 1–17 (MESFASLAGGGSSSTTA). Disordered stretches follow at residues 1–72 (MESF…AVQG), 121–148 (AAQQLDEADGHPRRRHEPQRDDDPDQLD), and 187–207 (AESNCEGTGSSEEEQDPSDKQ). The segment covering 187 to 196 (AESNCEGTGS) has biased composition (polar residues). One can recognise an ELK domain in the interval 207–227 (QLKHQLLRKYGGSLGDLRQVF). The homeobox; TALE-type DNA-binding region spans 228 to 291 (SKRTKKGKLP…NQRKRHWKPT (64 aa)).

This sequence belongs to the TALE/KNOX homeobox family.

The protein resides in the nucleus. Functionally, probable transcription factor that may be involved in shoot formation during embryogenesis. In Oryza sativa subsp. japonica (Rice), this protein is Homeobox protein knotted-1-like 8 (OSH43).